The primary structure comprises 178 residues: MLKGAIAQRYAQALFELAVQENLDGIEAELQELVQCVEQNAEVAHVLYHPHISLSEKKDLMNKIFAGELSVTVRNFLNLLIDRRRQNYLMEIARVFAHLADEARNIVEAKVASAIPLSETQEQRLHQELARMTGKNVRMVKEVRPELIGGVMIQIGDRVMDGTVAFKLQRIRQSLSHA.

Belongs to the ATPase delta chain family. F-type ATPases have 2 components, F(1) - the catalytic core - and F(0) - the membrane proton channel. F(1) has five subunits: alpha(3), beta(3), gamma(1), delta(1), epsilon(1). F(0) has three main subunits: a(1), b(2) and c(10-14). The alpha and beta chains form an alternating ring which encloses part of the gamma chain. F(1) is attached to F(0) by a central stalk formed by the gamma and epsilon chains, while a peripheral stalk is formed by the delta and b chains.

It localises to the cell membrane. Its function is as follows. F(1)F(0) ATP synthase produces ATP from ADP in the presence of a proton or sodium gradient. F-type ATPases consist of two structural domains, F(1) containing the extramembraneous catalytic core and F(0) containing the membrane proton channel, linked together by a central stalk and a peripheral stalk. During catalysis, ATP synthesis in the catalytic domain of F(1) is coupled via a rotary mechanism of the central stalk subunits to proton translocation. This protein is part of the stalk that links CF(0) to CF(1). It either transmits conformational changes from CF(0) to CF(1) or is implicated in proton conduction. In Desulfitobacterium hafniense (strain Y51), this protein is ATP synthase subunit delta.